A 190-amino-acid polypeptide reads, in one-letter code: MIGNLSGIVDEVRSDHIILNVNDVGYMVYLSAKTLNACSIGSRVKLLIETYANNRENVAQLYGFISKEEQQCLRLLVKVSGVSYKTAMSILGKLTPEQLFLAIMNEDKVALKMSGLGLKLINRIITELSGKVSKLEINNNNFHPINEDALSALINLGYEKMKAYDTIKKYRPNLDTKDIIRMALKELSIL.

Residues methionine 1–isoleucine 65 form a domain I region. Residues serine 66–histidine 143 form a domain II region. Positions proline 144–glutamate 147 are flexible linker. Residues glutamate 147 to leucine 190 are domain III.

Belongs to the RuvA family. Homotetramer. Forms an RuvA(8)-RuvB(12)-Holliday junction (HJ) complex. HJ DNA is sandwiched between 2 RuvA tetramers; dsDNA enters through RuvA and exits via RuvB. An RuvB hexamer assembles on each DNA strand where it exits the tetramer. Each RuvB hexamer is contacted by two RuvA subunits (via domain III) on 2 adjacent RuvB subunits; this complex drives branch migration. In the full resolvosome a probable DNA-RuvA(4)-RuvB(12)-RuvC(2) complex forms which resolves the HJ.

The protein resides in the cytoplasm. Its function is as follows. The RuvA-RuvB-RuvC complex processes Holliday junction (HJ) DNA during genetic recombination and DNA repair, while the RuvA-RuvB complex plays an important role in the rescue of blocked DNA replication forks via replication fork reversal (RFR). RuvA specifically binds to HJ cruciform DNA, conferring on it an open structure. The RuvB hexamer acts as an ATP-dependent pump, pulling dsDNA into and through the RuvAB complex. HJ branch migration allows RuvC to scan DNA until it finds its consensus sequence, where it cleaves and resolves the cruciform DNA. The sequence is that of Holliday junction branch migration complex subunit RuvA from Wolbachia pipientis wMel.